The primary structure comprises 1500 residues: Carbamoyl-phosphate synthase [ammonia], mitochondrial (1500 aa).

The N-terminal 38 residues, 1 to 38 (MTRILTAFKVVRTLKTGFGFTNVTAHQKWKFSRPGIRL), are a transit peptide targeting the mitochondrion. Positions 39–218 (LSVKAQTAHI…VKVYGKGNPT (180 aa)) are anthranilate phosphoribosyltransferase homolog. An N6-acetyllysine; alternate mark is found at Lys55, Lys57, and Lys119. Lys55 carries the N6-glutaryllysine; alternate modification. Lys55, Lys57, and Lys119 each carry N6-succinyllysine; alternate. The residue at position 148 (Ser148) is a Phosphoserine. Lys157 and Lys171 each carry N6-acetyllysine; alternate. Lys157 bears the N6-succinyllysine; alternate mark. Lys171 bears the N6-glutaryllysine; alternate mark. N6-glutaryllysine is present on Lys176. N6-acetyllysine is present on residues Lys182 and Lys197. 5 positions are modified to N6-acetyllysine; alternate: Lys207, Lys210, Lys214, Lys219, and Lys228. N6-glutaryllysine; alternate is present on residues Lys207, Lys210, Lys214, Lys219, and Lys228. Lys207 is modified (N6-succinyllysine; alternate). Lys214 carries the N6-succinyllysine; alternate modification. In terms of domain architecture, Glutamine amidotransferase type-1 spans 219–404 (KVVAVDCGIK…FSLIKKGKAT (186 aa)). Position 237 is an N6-glutaryllysine (Lys237). Residues Lys280, Lys287, Lys307, and Lys310 each carry the N6-acetyllysine; alternate modification. Residue Lys280 is modified to N6-glutaryllysine; alternate. 2 positions are modified to N6-succinyllysine; alternate: Lys287 and Lys307. N6-glutaryllysine; alternate is present on residues Lys307 and Lys310. N6-succinyllysine is present on Lys400. 4 positions are modified to N6-glutaryllysine; alternate: Lys402, Lys412, Lys453, and Lys458. N6-succinyllysine; alternate occurs at positions 402 and 412. Lys412, Lys453, Lys458, Lys522, Lys527, and Lys532 each carry N6-acetyllysine; alternate. N6-succinyllysine; alternate occurs at positions 458, 522, and 527. N6-glutaryllysine; alternate is present on residues Lys527 and Lys532. The residue at position 537 (Ser537) is a Phosphoserine; alternate. O-linked (GlcNAc) serine; alternate glycosylation occurs at Ser537. Ser540 carries the post-translational modification Phosphoserine. The ATP-grasp 1 domain maps to 551–743 (SDKLNEINEK…LAFIAAKIAL (193 aa)). 2 positions are modified to N6-acetyllysine; alternate: Lys553 and Lys560. Lys553 is subject to N6-glutaryllysine; alternate. N6-succinyllysine; alternate occurs at positions 553 and 560. Ser569 bears the Phosphoserine mark. Lys575 and Lys612 each carry N6-acetyllysine; alternate. Residues Lys575 and Lys612 each carry the N6-succinyllysine; alternate modification. Lys630 is subject to N6-acetyllysine. Lys728 carries the N6-glutaryllysine modification. 6 positions are modified to N6-acetyllysine; alternate: Lys751, Lys757, Lys772, Lys793, Lys811, and Lys831. N6-succinyllysine; alternate is present on residues Lys751 and Lys757. N6-glutaryllysine; alternate is present on residues Lys757, Lys772, Lys793, and Lys811. Lys793 is modified (N6-succinyllysine; alternate). Residue Lys831 is modified to N6-succinyllysine; alternate. A Phosphoserine modification is found at Ser835. An N6-acetyllysine; alternate mark is found at Lys841 and Lys856. Residues Lys841 and Lys856 each carry the N6-glutaryllysine; alternate modification. Lys869 carries the post-translational modification N6-glutaryllysine. N6-acetyllysine; alternate occurs at positions 875, 889, and 892. 3 positions are modified to N6-glutaryllysine; alternate: Lys875, Lys889, and Lys892. 3 positions are modified to N6-succinyllysine; alternate: Lys875, Lys889, and Lys892. A phosphoserine mark is found at Ser896 and Ser898. Lys905 carries the N6-glutaryllysine modification. N6-acetyllysine; alternate is present on residues Lys908, Lys915, and Lys919. An N6-glutaryllysine; alternate mark is found at Lys908, Lys915, and Lys919. N6-succinyllysine; alternate occurs at positions 915 and 919. The residue at position 935 (Lys935) is an N6-acetyllysine. Ser1036 is subject to Phosphoserine. At Lys1074 the chain carries N6-acetyllysine; alternate. An N6-glutaryllysine; alternate modification is found at Lys1074. Lys1074 bears the N6-succinyllysine; alternate mark. A phosphoserine mark is found at Ser1079, Ser1090, and Ser1093. An ATP-grasp 2 domain is found at 1093 to 1284 (SAVLDELKVA…FIDVATKVMI (192 aa)). Residue Lys1100 is modified to N6-acetyllysine; alternate. At Lys1100 the chain carries N6-succinyllysine; alternate. An N6-succinyllysine modification is found at Lys1149. Lys1150 carries the N6-glutaryllysine modification. An N6-acetyllysine; alternate mark is found at Lys1168 and Lys1183. N6-glutaryllysine; alternate is present on residues Lys1168 and Lys1183. N6-succinyllysine; alternate occurs at positions 1168 and 1183. A Phosphoserine modification is found at Ser1203. At Lys1222 the chain carries N6-acetyllysine. Lys1224 carries the post-translational modification N6-glutaryllysine. N6-acetyllysine; alternate occurs at positions 1232, 1269, and 1291. N6-succinyllysine; alternate is present on residues Lys1232, Lys1269, and Lys1291. Ser1331 carries O-linked (GlcNAc) serine glycosylation. A glycan (O-linked (GlcNAc) threonine) is linked at Thr1332. In terms of domain architecture, MGS-like spans 1355–1500 (FKIPQKGILI…YRQYSAGKAA (146 aa)). Lys1356 is modified (N6-acetyllysine; alternate). 2 positions are modified to N6-glutaryllysine; alternate: Lys1356 and Lys1360. An N6-succinyllysine; alternate mark is found at Lys1356 and Lys1360. Positions 1391, 1394, and 1410 each coordinate N-acetyl-L-glutamate. Residues Ser1419 and Ser1431 each carry the phosphoserine modification. N-acetyl-L-glutamate-binding residues include Asn1437 and Asn1440. The residue at position 1444 (Lys1444) is an N6-acetyllysine; alternate. Lys1444 is subject to N6-succinyllysine; alternate. Asn1449 is an N-acetyl-L-glutamate binding site. Lys1471, Lys1479, and Lys1486 each carry N6-acetyllysine; alternate. N6-succinyllysine; alternate occurs at positions 1471, 1479, and 1486. 2 positions are modified to N6-glutaryllysine; alternate: Lys1479 and Lys1486.

In terms of assembly, can form homooligomers (monomers as predominant form and dimers). Post-translationally, undergoes proteolytic cleavage in the C-terminal region corresponding to the loss of approximately 12 AA residues from the C-terminus. In terms of processing, succinylated at Lys-287 and Lys-1291. Desuccinylated at Lys-1291 by SIRT5, leading to activation. Glutarylated. Glutarylation levels increase during fasting. Deglutarylated by SIRT5 at Lys-55, Lys-219, Lys-412, Lys-889, Lys-892, Lys-915, Lys-1360 and Lys-1486, leading to activation. Primarily in the liver and small intestine.

Its subcellular location is the mitochondrion. The protein resides in the nucleus. It localises to the nucleolus. It is found in the cell membrane. The enzyme catalyses hydrogencarbonate + NH4(+) + 2 ATP = carbamoyl phosphate + 2 ADP + phosphate + 2 H(+). Requires N-acetyl-L-glutamate (NAG) as an allosteric activator. Activated by glycerol in the absence of NAG, whereas in the presence of NAG it is inhibited by increasing concentrations of glycerol. In terms of biological role, involved in the urea cycle of ureotelic animals where the enzyme plays an important role in removing excess ammonia from the cell. This Homo sapiens (Human) protein is Carbamoyl-phosphate synthase [ammonia], mitochondrial (CPS1).